Here is a 136-residue protein sequence, read N- to C-terminus: General odorant-binding protein 57d (136 aa).

Positions 1–29 are cleaved as a signal peptide; sequence MPEKMSLRLVPHLACIIFILEIQFRIADS. 3 cysteine pairs are disulfide-bonded: cysteine 33–cysteine 70, cysteine 66–cysteine 118, and cysteine 107–cysteine 127.

This sequence belongs to the PBP/GOBP family.

In terms of biological role, present in the aqueous fluid surrounding olfactory sensory dendrites and are thought to aid in the capture and transport of hydrophobic odorants into and through this fluid. This chain is General odorant-binding protein 57d, found in Drosophila melanogaster (Fruit fly).